The primary structure comprises 287 residues: T-cell ecto-ADP-ribosyltransferase 1 (287 aa).

An N-terminal signal peptide occupies residues 1 to 20 (MPSNNFKFFLTWWLTQQVTG). Disulfide bonds link C41-C246, C80-C201, and C141-C193. Positions 61–241 (EELKLEWEKA…ISLDSPKRKK (181 aa)) constitute a TR mART core domain. 2 residues coordinate NAD(+): Y98 and R146. Catalysis depends on residues R146 and S167. A glycan (N-linked (GlcNAc...) asparagine) is linked at N171. S202 is an NAD(+) binding site. E209 is an active-site residue. N256 carries an N-linked (GlcNAc...) asparagine glycan. The GPI-anchor amidated serine moiety is linked to residue S258. Residues 259-287 (SLGSRESCVSLFLVVLLGLLVQQLTLAEP) constitute a propeptide, removed in mature form.

It belongs to the Arg-specific ADP-ribosyltransferase family. In terms of processing, it is proposed that in the absence of reducing agents, a disulfide bond is formed between Cys-80 and Cys-201, leading to a conformational change that reduces the catalytic rate of NAD glycohydrolysis. Expressed in spleen, intestine and thymus.

The protein localises to the cell membrane. The enzyme catalyses L-arginyl-[protein] + NAD(+) = N(omega)-(ADP-D-ribosyl)-L-arginyl-[protein] + nicotinamide + H(+). It catalyses the reaction NAD(+) + H2O = ADP-D-ribose + nicotinamide + H(+). Its function is as follows. Has both ADP-ribosyltransferase activity and thiol-dependent NAD(+) glycohydrolase activity. The sequence is that of T-cell ecto-ADP-ribosyltransferase 1 (Art2a) from Mus musculus (Mouse).